The primary structure comprises 317 residues: Peroxidase 64 (317 aa).

The signal sequence occupies residues M1–A22. Cystine bridges form between C32/C111, C65/C70, C117/C313, and C195/C227. H63 serves as the catalytic Proton acceptor. The Ca(2+) site is built by D64, V67, G69, D71, and S73. Position 158 (P158) interacts with substrate. A glycan (N-linked (GlcNAc...) asparagine) is linked at N163. Residue H188 participates in heme b binding. T189 is a binding site for Ca(2+). 3 residues coordinate Ca(2+): D241, T243, and D248.

This sequence belongs to the peroxidase family. Classical plant (class III) peroxidase subfamily. Requires heme b as cofactor. The cofactor is Ca(2+). In terms of tissue distribution, expressed in the whole plant, but preferentially in roots.

The protein localises to the secreted. It carries out the reaction 2 a phenolic donor + H2O2 = 2 a phenolic radical donor + 2 H2O. Its function is as follows. Removal of H(2)O(2), oxidation of toxic reductants, biosynthesis and degradation of lignin, suberization, auxin catabolism, response to environmental stresses such as wounding, pathogen attack and oxidative stress. These functions might be dependent on each isozyme/isoform in each plant tissue. The chain is Peroxidase 64 (PER64) from Arabidopsis thaliana (Mouse-ear cress).